The primary structure comprises 179 residues: Riboflavin kinase (179 aa).

Residue 61-66 coordinates CDP; sequence GDGEGR. Residues T90 and N92 each contribute to the Mg(2+) site. The FMN site is built by T147 and E155. Residue 160 to 163 participates in CDP binding; that stretch reads VELR.

The protein belongs to the archaeal riboflavin kinase family. The cofactor is Mg(2+).

It carries out the reaction riboflavin + CTP = CDP + FMN + H(+). It functions in the pathway cofactor biosynthesis; FMN biosynthesis; FMN from riboflavin (CTP route): step 1/1. In terms of biological role, catalyzes the CTP-dependent phosphorylation of riboflavin (vitamin B2) to form flavin mononucleotide (FMN). The sequence is that of Riboflavin kinase from Ignicoccus hospitalis (strain KIN4/I / DSM 18386 / JCM 14125).